The following is a 122-amino-acid chain: UPF0102 protein MUL_2060 (122 aa).

The protein belongs to the UPF0102 family.

The chain is UPF0102 protein MUL_2060 from Mycobacterium ulcerans (strain Agy99).